Here is a 606-residue protein sequence, read N- to C-terminus: MGIAEVALHSMPGAFAAHSPASNLPLAADAARGRRRRSANSLHSSRALQGPVRFPGLRAAVECQCQRIDDLARVTEGNGAWVKDAVDKASHALGDVRVPGQAVGGNGSVNGSAAKPPPQRRKASSVEDEAWELLRESVVYYCGSPVGTIAANDPNDANPMNYDQVFIRDFIPSGIAFLLKGEYEIVRNFILHTLQLQSWEKTMDCHSPGQGLMPASFKVRTIPLDGDEDATEEVLDPDFGEAAIGRVAPVDSGLWWIILLRAYGKCSGDLTVQERIDVQTGIKMILKLCLADGFDMFPTLLVTDGSCMIDRRMGIHGHPLEIQALFYSALLCAREMLTPEDGSADLIRALNNRLIALSFHIREYYWVDMQKLNEIYRYKTEEYSYDAVNKFNIYPDQVSPWLVEWIPPKGGYFIGNLQPAHMDFRFFSLGNLWSIVSSLATTHQSHAILDLIESKWSDLVAEMPLKICYPALENQEWKIITGSDPKNTPWSYHNGGSWPTLLWQLTVASIKMNRPEIAAKAVEVAERRIAIDKWPEYYDTKRARFIGKQSRLYQTWSIAGYLVAKQLLDKPDAARILSNDEDSEILNALSTNRKRGKKVLKKTFIV.

The transit peptide at 1–58 (MGIAEVALHSMPGAFAAHSPASNLPLAADAARGRRRRSANSLHSSRALQGPVRFPGLR) directs the protein to the chloroplast. The disordered stretch occupies residues 97-126 (RVPGQAVGGNGSVNGSAAKPPPQRRKASSV).

It belongs to the glycosyl hydrolase 100 family.

Its subcellular location is the plastid. It localises to the chloroplast. It carries out the reaction Hydrolysis of terminal non-reducing beta-D-fructofuranoside residues in beta-D-fructofuranosides.. Functionally, mitochondrial invertase that cleaves sucrose into glucose and fructose. This Oryza sativa subsp. japonica (Rice) protein is Neutral/alkaline invertase 3, chloroplastic.